The chain runs to 279 residues: ATP synthase gamma chain (279 aa).

The protein belongs to the ATPase gamma chain family. F-type ATPases have 2 components, CF(1) - the catalytic core - and CF(0) - the membrane proton channel. CF(1) has five subunits: alpha(3), beta(3), gamma(1), delta(1), epsilon(1). CF(0) has three main subunits: a, b and c.

Its subcellular location is the cell membrane. Produces ATP from ADP in the presence of a proton gradient across the membrane. The gamma chain is believed to be important in regulating ATPase activity and the flow of protons through the CF(0) complex. In Mycoplasma pneumoniae (strain ATCC 29342 / M129 / Subtype 1) (Mycoplasmoides pneumoniae), this protein is ATP synthase gamma chain.